We begin with the raw amino-acid sequence, 590 residues long: Aspartate--tRNA(Asp/Asn) ligase (590 aa).

Glu-172 serves as a coordination point for L-aspartate. The aspartate stretch occupies residues 196–199; that stretch reads QLFK. Position 218 (Arg-218) interacts with L-aspartate. ATP is bound by residues 218-220 and Gln-227; that span reads RDE. His-449 is a binding site for L-aspartate. Glu-484 serves as a coordination point for ATP. An L-aspartate-binding site is contributed by Arg-491. ATP is bound at residue 536 to 539; sequence GIDR.

This sequence belongs to the class-II aminoacyl-tRNA synthetase family. Type 1 subfamily. In terms of assembly, homodimer.

The protein resides in the cytoplasm. It carries out the reaction tRNA(Asx) + L-aspartate + ATP = L-aspartyl-tRNA(Asx) + AMP + diphosphate. In terms of biological role, aspartyl-tRNA synthetase with relaxed tRNA specificity since it is able to aspartylate not only its cognate tRNA(Asp) but also tRNA(Asn). Reaction proceeds in two steps: L-aspartate is first activated by ATP to form Asp-AMP and then transferred to the acceptor end of tRNA(Asp/Asn). In Francisella tularensis subsp. tularensis (strain SCHU S4 / Schu 4), this protein is Aspartate--tRNA(Asp/Asn) ligase.